The following is a 299-amino-acid chain: MSRKTLYELQAENVRKTYLFIVTFSLILFAIGYFFVWYFNWGLTGIVLLAIFIVLYNWIAYEQSDKIALASVGAIPANPEEYYVLHNIVEEVALAAGIPKPNVYIMEESQPNAFATGKDPKHASVCVTTGLLQMMNREELQGVIAHEISHIRNRDILLMTVVAVVAGLIILLRDVMLRSMWWGMGESRRRDKNDNGAIILLIIGLIFSIIAPLIVLIIRSAISRQREYLADATGAFIVRDPYGLASALEKIGSYTRPMRVTSDATAHLFISNPFGRAEKLFATHPPIEERIKRLKSLTM.

2 helical membrane-spanning segments follow: residues 19-39 (LFIVTFSLILFAIGYFFVWYF) and 41-61 (WGLTGIVLLAIFIVLYNWIAY). Position 146 (H146) interacts with Zn(2+). E147 is a catalytic residue. Zn(2+) is bound at residue H150. The next 2 membrane-spanning stretches (helical) occupy residues 156–176 (ILLMTVVAVVAGLIILLRDVM) and 198–218 (IILLIIGLIFSIIAPLIVLII). Position 227 (E227) interacts with Zn(2+).

The protein belongs to the peptidase M48B family. It depends on Zn(2+) as a cofactor.

The protein resides in the cell membrane. This Thermoanaerobacter pseudethanolicus (strain ATCC 33223 / 39E) (Clostridium thermohydrosulfuricum) protein is Protease HtpX homolog.